A 161-amino-acid chain; its full sequence is MTLYLVPPLDSADKELPALASKAGVTLLEIEFLHELWPHLSGGQIVIAALNANNLAILNRHMSTLLVELPVAVMAVPGASYRSDWNMIAHALPSEDWITLSNKMLKSGLLANDTVQGEKRSGAEPLSPNVYTDALSRLGIATAHAIPVEPEQPFDVDEVSA.

As to quaternary structure, homodimer. Part of the packaging complex composed of RDRP, P4 and P7. Interacts with RDRP.

Its subcellular location is the virion. Assembly protein part of the packaging complex that packages the viral RNA segments, replicate them into a double-stranded form and transcribe them. Required for efficient procapsid assembly. Necessary for stable packaging. May stabilize the RNA-dependent RNA polymerase (RdRP) in its position at the three-fold axis on the inner side of empty-unexpanded procapsids. Could play a role in viral RNA recognition. Seems to be involved in the regulation of plus strand synthesis (transcription) as a fidelity factor. This chain is Assembly protein P7 (P7), found in Pseudomonas phage phi6 (Bacteriophage phi-6).